Here is a 770-residue protein sequence, read N- to C-terminus: Protein argonaute (770 aa).

An N-terminal domain region spans residues 1-151; it reads MKAKVVINLV…VIHIIHQIQS (151 aa). The region spanning 154–272 is the PAZ domain; that stretch reads TLWELVNKDP…LLPQLVVPTY (119 aa). The interval 276–361 is interdomain connector; that stretch reads QLESDVAKEI…SQLLLWTNYS (86 aa). Residues 362 to 544 are mid domain; the sequence is RKYPVILPYE…LSKLGVKYYV (183 aa). Positions 473-756 constitute a Piwi domain; the sequence is GLAFIAARNK…FANAIRNEWK (284 aa). Residues Asp558, Glu596, Asp628, and His745 contribute to the active site. Mn(2+) is bound at residue Asp558. Mn(2+)-binding residues include Asp628, His745, and Val770.

Belongs to the argonaute family. Long pAgo subfamily. Monomer. Mn(2+) is required as a cofactor.

Inhibited at greater than 500 mM NaCl. Its function is as follows. A DNA-guided ssDNA endonuclease that may play a role in defense against invading mobile genetic elements. Uses short 5'-phospho-ssDNA sequences as guides (gDNA) to bind complementary target strands, resulting in cleavage of the target DNA (tDNA). Endonucleolytically cleaves DNA in short dsDNA (the gDNA indicates where to cleave on the tDNA). Efficient guide-dependent target DNA cleavage requires a minimal gDNA length of 15 nucleotides (nt) and works up to at least 31 nt. Overexpression decreases plasmid transformation efficiency. Has no appreciable activity with gRNA or on target RNA. Also has guide-independent activity on plasmid DNA called 'chopping'. The cleavage site is 10 nucleotides (nt) downstream of the target residue base-paired with the 5'-end of the gDNA, cleavage is insensitive to adenine methylation. DNA cleavage produces 5'-phosphomonoesters (as it can be ligated by T4 DNA ligase). The polypeptide is Protein argonaute (Pyrococcus furiosus (strain ATCC 43587 / DSM 3638 / JCM 8422 / Vc1)).